A 107-amino-acid polypeptide reads, in one-letter code: U1-lycotoxin-Ls1b (107 aa).

An N-terminal signal peptide occupies residues 1-20 (MMKVLVVVALLVTLISYSSG). The propeptide occupies 21–41 (EGIDDLEADELLSLMANEQTR). 4 cysteine pairs are disulfide-bonded: cysteine 44–cysteine 59, cysteine 51–cysteine 68, cysteine 58–cysteine 86, and cysteine 70–cysteine 84.

Belongs to the neurotoxin 19 (CSTX) family. 04 (U1-Lctx) subfamily. As to expression, expressed by the venom gland.

It localises to the secreted. The chain is U1-lycotoxin-Ls1b from Lycosa singoriensis (Wolf spider).